The chain runs to 44 residues: Unknown protein 9 (44 aa).

This chain is Unknown protein 9, found in Pseudotsuga menziesii (Douglas-fir).